Reading from the N-terminus, the 250-residue chain is 2,3-bisphosphoglycerate-dependent phosphoglycerate mutase (250 aa).

Substrate is bound by residues 10–17 (RHGESQWN), 23–24 (TG), Arg-62, 89–92 (ERHY), Lys-100, 116–117 (RR), and 185–186 (GN). Catalysis depends on His-11, which acts as the Tele-phosphohistidine intermediate. Catalysis depends on Glu-89, which acts as the Proton donor/acceptor.

Belongs to the phosphoglycerate mutase family. BPG-dependent PGAM subfamily. As to quaternary structure, homodimer.

It catalyses the reaction (2R)-2-phosphoglycerate = (2R)-3-phosphoglycerate. It functions in the pathway carbohydrate degradation; glycolysis; pyruvate from D-glyceraldehyde 3-phosphate: step 3/5. Functionally, catalyzes the interconversion of 2-phosphoglycerate and 3-phosphoglycerate. This chain is 2,3-bisphosphoglycerate-dependent phosphoglycerate mutase, found in Sodalis glossinidius (strain morsitans).